A 328-amino-acid chain; its full sequence is GMP reductase (328 aa).

The Thioimidate intermediate role is filled by C174. 203–226 is a binding site for NADP(+); the sequence is IIADGGIRTHGDIAKSIRFGASMV.

It belongs to the IMPDH/GMPR family. GuaC type 2 subfamily.

The catalysed reaction is IMP + NH4(+) + NADP(+) = GMP + NADPH + 2 H(+). In terms of biological role, catalyzes the irreversible NADPH-dependent deamination of GMP to IMP. It functions in the conversion of nucleobase, nucleoside and nucleotide derivatives of G to A nucleotides, and in maintaining the intracellular balance of A and G nucleotides. The protein is GMP reductase of Staphylococcus saprophyticus subsp. saprophyticus (strain ATCC 15305 / DSM 20229 / NCIMB 8711 / NCTC 7292 / S-41).